The chain runs to 189 residues: MAIKLIVGLRNPGSAYEQTRHNAGAWLVTALAQRHNSHFKIDKKMQAELTEIDINNHPCRLALPLTFMNHSGQTTRIISQFYKIEPGEILIVHDELDLPVGRIKLKTGGGHGGHNGLRDITAQLGTGEFHRLRIGIGHPGHKDLVHQYVLSRPSMHDRQQIYDAIDRGIAIIPIVLSGDMARAMNQVNA.

Tyrosine 16 is a tRNA binding site. Catalysis depends on histidine 21, which acts as the Proton acceptor. Positions 67, 69, and 115 each coordinate tRNA.

This sequence belongs to the PTH family. As to quaternary structure, monomer.

The protein resides in the cytoplasm. It catalyses the reaction an N-acyl-L-alpha-aminoacyl-tRNA + H2O = an N-acyl-L-amino acid + a tRNA + H(+). Its function is as follows. Hydrolyzes ribosome-free peptidyl-tRNAs (with 1 or more amino acids incorporated), which drop off the ribosome during protein synthesis, or as a result of ribosome stalling. Functionally, catalyzes the release of premature peptidyl moieties from peptidyl-tRNA molecules trapped in stalled 50S ribosomal subunits, and thus maintains levels of free tRNAs and 50S ribosomes. In Legionella pneumophila (strain Paris), this protein is Peptidyl-tRNA hydrolase.